We begin with the raw amino-acid sequence, 155 residues long: Protein-export protein SecB (155 aa).

This sequence belongs to the SecB family. As to quaternary structure, homotetramer, a dimer of dimers. One homotetramer interacts with 1 SecA dimer.

The protein resides in the cytoplasm. One of the proteins required for the normal export of preproteins out of the cell cytoplasm. It is a molecular chaperone that binds to a subset of precursor proteins, maintaining them in a translocation-competent state. It also specifically binds to its receptor SecA. This is Protein-export protein SecB from Paramagnetospirillum magneticum (strain ATCC 700264 / AMB-1) (Magnetospirillum magneticum).